A 62-amino-acid chain; its full sequence is Large ribosomal subunit protein uL29 (62 aa).

It belongs to the universal ribosomal protein uL29 family.

The sequence is that of Large ribosomal subunit protein uL29 from Amoebophilus asiaticus (strain 5a2).